The sequence spans 154 residues: Myoglobin (154 aa).

The region spanning Val2–Lys148 is the Globin domain. Ser4 bears the Phosphoserine mark. His65 is a binding site for nitrite. His65 contacts O2. Residue Thr68 is modified to Phosphothreonine. Heme b is bound at residue His94.

The protein belongs to the globin family. Monomeric.

Its subcellular location is the cytoplasm. It localises to the sarcoplasm. It catalyses the reaction Fe(III)-heme b-[protein] + nitric oxide + H2O = Fe(II)-heme b-[protein] + nitrite + 2 H(+). It carries out the reaction H2O2 + AH2 = A + 2 H2O. Functionally, monomeric heme protein which primary function is to store oxygen and facilitate its diffusion within muscle tissues. Reversibly binds oxygen through a pentacoordinated heme iron and enables its timely and efficient release as needed during periods of heightened demand. Depending on the oxidative conditions of tissues and cells, and in addition to its ability to bind oxygen, it also has a nitrite reductase activity whereby it regulates the production of bioactive nitric oxide. Under stress conditions, like hypoxia and anoxia, it also protects cells against reactive oxygen species thanks to its pseudoperoxidase activity. This chain is Myoglobin (MB), found in Megaptera novaeangliae (Humpback whale).